A 152-amino-acid chain; its full sequence is Sec-independent protein translocase protein TatB (152 aa).

The helical transmembrane segment at 1–21 threads the bilayer; the sequence is MFGISFSELLLVGLVALLVLG. Residues 98–115 show a composition bias toward low complexity; sequence HAPGAATVAEAPPASEVP. Positions 98-152 are disordered; sequence HAPGAATVAEAPPASEVPAPLPSTPAPAPTAEPAAPVATPATTAPHDSTLPPRAP. A compositionally biased stretch (pro residues) spans 116 to 127; the sequence is APLPSTPAPAPT. The segment covering 128 to 142 has biased composition (low complexity); that stretch reads AEPAAPVATPATTAP.

This sequence belongs to the TatB family. The Tat system comprises two distinct complexes: a TatABC complex, containing multiple copies of TatA, TatB and TatC subunits, and a separate TatA complex, containing only TatA subunits. Substrates initially bind to the TatABC complex, which probably triggers association of the separate TatA complex to form the active translocon.

The protein localises to the cell inner membrane. Part of the twin-arginine translocation (Tat) system that transports large folded proteins containing a characteristic twin-arginine motif in their signal peptide across membranes. Together with TatC, TatB is part of a receptor directly interacting with Tat signal peptides. TatB may form an oligomeric binding site that transiently accommodates folded Tat precursor proteins before their translocation. The protein is Sec-independent protein translocase protein TatB of Pseudomonas fluorescens (strain ATCC BAA-477 / NRRL B-23932 / Pf-5).